Here is a 586-residue protein sequence, read N- to C-terminus: CTP synthase 2 (586 aa).

The 255-residue stretch at 300 to 554 (SIALVGKYTK…LAATGTLNTH (255 aa)) folds into the Glutamine amidotransferase type-1 domain. Catalysis depends on for GATase activity residues Cys399, His526, and Glu528. A phosphoserine mark is found at Ser568, Ser571, and Ser574.

Belongs to the CTP synthase family.

It catalyses the reaction UTP + L-glutamine + ATP + H2O = CTP + L-glutamate + ADP + phosphate + 2 H(+). Its pathway is pyrimidine metabolism; CTP biosynthesis via de novo pathway; CTP from UDP: step 2/2. In terms of biological role, catalyzes the ATP-dependent amination of UTP to CTP with either L-glutamine or ammonia as the source of nitrogen. Constitutes the rate-limiting enzyme in the synthesis of cytosine nucleotides. The chain is CTP synthase 2 (Ctps2) from Rattus norvegicus (Rat).